A 352-amino-acid chain; its full sequence is Putative [LysW]-L-2-aminoadipate/[LysW]-L-glutamate phosphate reductase (352 aa).

Residues 10 to 13 (SGFT) and 34 to 36 (SRR) contribute to the NADP(+) site. The active site involves C151. N319 provides a ligand contact to NADP(+).

It belongs to the NAGSA dehydrogenase family. Type 1 subfamily. LysY sub-subfamily.

It localises to the cytoplasm. It carries out the reaction [amino-group carrier protein]-C-terminal-N-(1-carboxy-5-oxopentan-1-yl)-L-glutamine + phosphate + NADP(+) = [amino-group carrier protein]-C-terminal-N-(1-carboxy-5-phosphooxy-5-oxopentan-1-yl)-L-glutamine + NADPH + H(+). The enzyme catalyses [amino-group carrier protein]-C-terminal-gamma-(L-glutamyl-5-semialdehyde)-L-glutamate + phosphate + NADP(+) = [amino-group carrier protein]-C-terminal-gamma-(5-phospho-L-glutamyl)-L-glutamate + NADPH + H(+). It functions in the pathway amino-acid biosynthesis; L-lysine biosynthesis via AAA pathway; L-lysine from L-alpha-aminoadipate (Thermus route): step 3/5. The protein operates within amino-acid biosynthesis; L-arginine biosynthesis. Functionally, involved in both the arginine and lysine biosynthetic pathways. This chain is Putative [LysW]-L-2-aminoadipate/[LysW]-L-glutamate phosphate reductase, found in Pyrobaculum islandicum (strain DSM 4184 / JCM 9189 / GEO3).